Here is a 244-residue protein sequence, read N- to C-terminus: 2-C-methyl-D-erythritol 4-phosphate cytidylyltransferase (244 aa).

It belongs to the IspD/TarI cytidylyltransferase family. IspD subfamily.

The catalysed reaction is 2-C-methyl-D-erythritol 4-phosphate + CTP + H(+) = 4-CDP-2-C-methyl-D-erythritol + diphosphate. Its pathway is isoprenoid biosynthesis; isopentenyl diphosphate biosynthesis via DXP pathway; isopentenyl diphosphate from 1-deoxy-D-xylulose 5-phosphate: step 2/6. In terms of biological role, catalyzes the formation of 4-diphosphocytidyl-2-C-methyl-D-erythritol from CTP and 2-C-methyl-D-erythritol 4-phosphate (MEP). In Prosthecochloris aestuarii (strain DSM 271 / SK 413), this protein is 2-C-methyl-D-erythritol 4-phosphate cytidylyltransferase.